Reading from the N-terminus, the 367-residue chain is tRNA/tmRNA (uracil-C(5))-methyltransferase (367 aa).

S-adenosyl-L-methionine is bound by residues Q190, Y218, N223, E239, and D299. The Nucleophile role is filled by C324. E358 serves as the catalytic Proton acceptor.

This sequence belongs to the class I-like SAM-binding methyltransferase superfamily. RNA M5U methyltransferase family. TrmA subfamily.

The enzyme catalyses uridine(54) in tRNA + S-adenosyl-L-methionine = 5-methyluridine(54) in tRNA + S-adenosyl-L-homocysteine + H(+). The catalysed reaction is uridine(341) in tmRNA + S-adenosyl-L-methionine = 5-methyluridine(341) in tmRNA + S-adenosyl-L-homocysteine + H(+). Dual-specificity methyltransferase that catalyzes the formation of 5-methyluridine at position 54 (m5U54) in all tRNAs, and that of position 341 (m5U341) in tmRNA (transfer-mRNA). This chain is tRNA/tmRNA (uracil-C(5))-methyltransferase, found in Musicola paradisiaca (strain Ech703) (Dickeya paradisiaca).